The primary structure comprises 662 residues: Interferon-induced GTP-binding protein Mx1 (662 aa).

Residue methionine 1 is modified to N-acetylmethionine; in Interferon-induced GTP-binding protein Mx1; alternate. In terms of domain architecture, Dynamin-type G spans 67-340 (DLALPAIAVI…LITHICKSLP (274 aa)). The interval 77–84 (GDQSSGKS) is G1 motif. A GTP-binding site is contributed by 77–84 (GDQSSGKS). The segment at 102 to 104 (VTR) is G2 motif. The segment at 178 to 181 (DLPG) is G3 motif. GTP contacts are provided by residues 178–182 (DLPGI) and 247–250 (TKPD). The interval 247–250 (TKPD) is G4 motif. Residues 279-282 (KCRG) form a G5 motif region. The tract at residues 341 to 366 (LLENQIKETHQRITEELQKYGVDIPE) is bundle signaling element (BSE). A middle domain region spans residues 366-533 (EDENEKMFFL…HFQMEQIVYC (168 aa)). Positions 367-632 (DENEKMFFLI…KDTYSWLLKE (266 aa)) are stalk. The interval 554–557 (KKKK) is critical for lipid-binding. One can recognise a GED domain in the interval 574-662 (MEEIFQHLMA…ARRRLAQFPG (89 aa)).

The protein belongs to the TRAFAC class dynamin-like GTPase superfamily. Dynamin/Fzo/YdjA family. As to quaternary structure, homotetramer. Oligomerizes into multimeric filamentous or ring-like structures by virtue of its stalk domain. Oligomerization is critical for GTPase activity, protein stability, and recognition of viral target structures. Interacts with TRPC1, TRPC3, TRPC4, TRPC5, TRPC6 and TRPC7. Interacts with HSPA5. Interacts with DDX39A and DDX39B. Interacts with TUBB/TUBB5. The GTP-bound form interacts (via C-terminus) with THOV P5 protein. The GTP-bound form interacts with LACV protein N. Interacts with CCHFV protein N. In terms of processing, ISGylated.

The protein localises to the cytoplasm. It is found in the endoplasmic reticulum membrane. The protein resides in the perinuclear region. Its subcellular location is the nucleus. Its function is as follows. Interferon-induced dynamin-like GTPase with antiviral activity against a wide range of RNA viruses and some DNA viruses. Its target viruses include negative-stranded RNA viruses and HBV through binding and inactivation of their ribonucleocapsid. May also antagonize reoviridae and asfarviridae replication. Inhibits thogoto virus (THOV) replication by preventing the nuclear import of viral nucleocapsids. Inhibits La Crosse virus (LACV) replication by sequestering viral nucleoprotein in perinuclear complexes, preventing genome amplification, budding, and egress. Inhibits influenza A virus (IAV) replication by decreasing or delaying NP synthesis and by blocking endocytic traffic of incoming virus particles. Enhances ER stress-mediated cell death after influenza virus infection. May regulate the calcium channel activity of TRPCs. The chain is Interferon-induced GTP-binding protein Mx1 (MX1) from Homo sapiens (Human).